Reading from the N-terminus, the 407-residue chain is tRNA pseudouridine synthase 4 (407 aa).

Residues 83-105 (FRPAPPHPNDRNRRRRKSNRLPD) form a disordered region. Asp115 serves as the catalytic Nucleophile. The interval 274–298 (TEQDINPQDGDEKINAKSPTTNSVT) is disordered. Ser291 carries the post-translational modification Phosphoserine. The residue at position 293 (Thr293) is a Phosphothreonine. Ser296 is modified (phosphoserine). Thr406 carries the phosphothreonine modification.

Belongs to the pseudouridine synthase TruB family.

The protein localises to the nucleus. The protein resides in the mitochondrion. It carries out the reaction uridine(55) in tRNA = pseudouridine(55) in tRNA. The enzyme catalyses a uridine in mRNA = a pseudouridine in mRNA. Functionally, responsible for synthesis of pseudouridine from uracil-55 in the psi GC loop of transfer RNAs. Also catalyzes pseudouridylation of mRNAs with the consensus sequence 5'-GGUUCRA-3'. This is tRNA pseudouridine synthase 4 from Schizosaccharomyces pombe (strain 972 / ATCC 24843) (Fission yeast).